We begin with the raw amino-acid sequence, 341 residues long: ATP synthase subunit a 2 (341 aa).

The signal sequence occupies residues 1–33 (MKRVKVIQIKGFFRVMALLAPLLLNAYLPVQAS). The next 6 membrane-spanning stretches (helical) occupy residues 112–132 (VVML…VGAA), 173–193 (LPYL…GLIP), 195–215 (GATA…TFFI), 242–262 (WIIM…ALTV), 273–293 (IVIL…VAAA), and 307–327 (IFVA…FIGL).

Belongs to the ATPase A chain family. In terms of assembly, F-type ATPases have 2 components, CF(1) - the catalytic core - and CF(0) - the membrane proton channel. CF(1) has five subunits: alpha(3), beta(3), gamma(1), delta(1), epsilon(1). CF(0) has four main subunits: a, b, b' and c.

The protein localises to the cell inner membrane. Its function is as follows. Key component of the proton channel; it plays a direct role in the translocation of protons across the membrane. The protein is ATP synthase subunit a 2 of Chlorobium luteolum (strain DSM 273 / BCRC 81028 / 2530) (Pelodictyon luteolum).